The chain runs to 3078 residues: Probable polyketide synthase 44 (3078 aa).

The Ketosynthase family 3 (KS3) domain maps to 10–435 (DNDVAIIGIG…GSNACLILTE (426 aa)). Residues Cys-175, His-320, and His-358 each act as for beta-ketoacyl synthase activity in the active site. The tract at residues 627 to 660 (GILASISIGHSLGEVSSAVCSGMIDLETGCFIIY) is acyl/malonyl transferase. The active-site For acyl/malonyl transferase activity is Ser-637. An N-terminal hotdog fold region spans residues 952–1072 (TNHLGYRNER…GRLSTTKHND (121 aa)). A PKS/mFAS DH domain is found at 952-1239 (TNHLGYRNER…YTQLTPYKNQ (288 aa)). Catalysis depends on His-984, which acts as the Proton acceptor; for dehydratase activity. A C-terminal hotdog fold region spans residues 1088 to 1239 (NFVTIQKKEL…YTQLTPYKNQ (152 aa)). Residue Asp-1150 is the Proton donor; for dehydratase activity of the active site. Residues 2080–2119 (LENIKTDLSNKNDNNNNNNNNNNDNKESNIKELLDNDDDE) adopt a coiled-coil conformation. The interval 2087–2108 (LSNKNDNNNNNNNNNNDNKESN) is disordered. Residues 2090–2102 (KNDNNNNNNNNNN) show a composition bias toward low complexity. A Carrier domain is found at 2558-2636 (SDDLSIREQI…QLIQSVTDAM (79 aa)). An O-(pantetheine 4'-phosphoryl)serine modification is found at Ser-2596. Residues 2694–2714 (NTVFLTGSSGFIGIYILFYLI) traverse the membrane as a helical segment.

Pantetheine 4'-phosphate serves as cofactor.

The protein resides in the membrane. Functionally, probable polyketide synthase. This is Probable polyketide synthase 44 (pks44) from Dictyostelium discoideum (Social amoeba).